A 378-amino-acid polypeptide reads, in one-letter code: Ribosomal RNA large subunit methyltransferase G (378 aa).

This sequence belongs to the methyltransferase superfamily. RlmG family.

Its subcellular location is the cytoplasm. It catalyses the reaction guanosine(1835) in 23S rRNA + S-adenosyl-L-methionine = N(2)-methylguanosine(1835) in 23S rRNA + S-adenosyl-L-homocysteine + H(+). In terms of biological role, specifically methylates the guanine in position 1835 (m2G1835) of 23S rRNA. The polypeptide is Ribosomal RNA large subunit methyltransferase G (Shewanella baltica (strain OS195)).